We begin with the raw amino-acid sequence, 408 residues long: Imidazolonepropionase (408 aa).

2 residues coordinate Fe(3+): histidine 73 and histidine 75. Zn(2+) is bound by residues histidine 73 and histidine 75. Positions 82, 145, and 178 each coordinate 4-imidazolone-5-propanoate. Tyrosine 145 is an N-formimidoyl-L-glutamate binding site. Histidine 243 contributes to the Fe(3+) binding site. Histidine 243 provides a ligand contact to Zn(2+). 4-imidazolone-5-propanoate is bound at residue glutamine 246. Aspartate 318 serves as a coordination point for Fe(3+). Position 318 (aspartate 318) interacts with Zn(2+). The N-formimidoyl-L-glutamate site is built by asparagine 320 and glycine 322. Serine 323 contacts 4-imidazolone-5-propanoate.

This sequence belongs to the metallo-dependent hydrolases superfamily. HutI family. It depends on Zn(2+) as a cofactor. The cofactor is Fe(3+).

The protein resides in the cytoplasm. The enzyme catalyses 4-imidazolone-5-propanoate + H2O = N-formimidoyl-L-glutamate. Its pathway is amino-acid degradation; L-histidine degradation into L-glutamate; N-formimidoyl-L-glutamate from L-histidine: step 3/3. In terms of biological role, catalyzes the hydrolytic cleavage of the carbon-nitrogen bond in imidazolone-5-propanoate to yield N-formimidoyl-L-glutamate. It is the third step in the universal histidine degradation pathway. This Shewanella woodyi (strain ATCC 51908 / MS32) protein is Imidazolonepropionase.